Consider the following 61-residue polypeptide: Small ribosomal subunit protein uS14 (61 aa).

Residues C24, C27, C40, and C43 each coordinate Zn(2+).

Belongs to the universal ribosomal protein uS14 family. Zinc-binding uS14 subfamily. In terms of assembly, part of the 30S ribosomal subunit. Contacts proteins S3 and S10. Zn(2+) serves as cofactor.

Its function is as follows. Binds 16S rRNA, required for the assembly of 30S particles and may also be responsible for determining the conformation of the 16S rRNA at the A site. This is Small ribosomal subunit protein uS14 from Campylobacter jejuni subsp. jejuni serotype O:6 (strain 81116 / NCTC 11828).